A 160-amino-acid polypeptide reads, in one-letter code: Large ribosomal subunit protein uL22c (160 aa).

This sequence belongs to the universal ribosomal protein uL22 family. As to quaternary structure, part of the 50S ribosomal subunit.

The protein resides in the plastid. It localises to the chloroplast. This protein binds specifically to 23S rRNA. In terms of biological role, the globular domain of the protein is located near the polypeptide exit tunnel on the outside of the subunit, while an extended beta-hairpin is found that lines the wall of the exit tunnel in the center of the 70S ribosome. In Eucalyptus globulus subsp. globulus (Tasmanian blue gum), this protein is Large ribosomal subunit protein uL22c (rpl22).